The chain runs to 374 residues: MSSSSPGEPLEPTDQDLDVLLKNLGNLVTPMALRVAATLRLVDHLLAGADTLAGLADRTDTHPQALSRLVRHLTVVGVLEGGEKQGRPLRPTRLGMLLADGHPAQQRAWLDLNGAVSHADLAFTGLLDVVRTGRPAYAGRYGRPFWEDLSADVALADSFDALMSCDEDLAYEAPADAYDWSAVRHVLDVGGGNGGMLAAIALRAPHLRGTLVELAGPAERARRRFADAGLADRVTVAEGDFFKPLPVTADVVLLSFVLLNWSDEDALTILRGCVRALEPGGRLLVLDRADVEGDGADRFFSTLLDLRMLTFMGGRVRTRDEVVDLAGSAGLALASERTSGSTTLPFDFSILEFTAVSEEAAPAAQASEALPAQE.

The S-adenosyl-L-methionine site is built by Tyr171, Gly190, Glu213, Asp240, Phe241, and Ser255.

It belongs to the class I-like SAM-binding methyltransferase superfamily. Cation-independent O-methyltransferase family. In terms of assembly, homodimer. Homotetramer in solution. Tetramers might not be very stable in solution.

The enzyme catalyses 15-demethylaclacinomycin T + AH2 + O2 = 10-decarboxymethylaclacinomycin T + A + CO2 + H2O. It carries out the reaction 10-carboxy-13-deoxycarminomycin + AH2 + O2 + H(+) = 10-hydroxy-13-deoxycarminomycin + A + CO2 + H2O. The catalysed reaction is 10-hydroxy-13-deoxycarminomycin + S-adenosyl-L-methionine = 10-hydroxy-13-deoxydaunorubicin + S-adenosyl-L-homocysteine + H(+). Its pathway is antibiotic biosynthesis; rhodomycin biosynthesis. It participates in antibiotic biosynthesis; aclacinomycin biosynthesis. The hydroxylation reaction requires S-adenosyl-L-methionine (SAM) as a cofactor. S-adenosine-L-homocysteine and sinefungin (a SAM analog) can also support the decarboxylative hydroxylation activity with 10-carboxy-13-deoxycarminomycin as substrate. SAM and its analogs are considered an essential structural ligand to maintain ternary structural integrity and the proper binding mode and orientation of electron-rich substrates during decarboxylative hydroxylation of C-10 by RdmB. In terms of biological role, involved in the biosynthesis of anthracyclines, an important group of aromatic polyketide antibiotics used in cancer chemotherapy. Acts as a 10-hydroxylase to catalyze a decarboxylative hydroxylation reaction on anthracyclines. During biosynthesis of rhodomycin, it catalyzes the removal of the carboxylic group at the C-10 position of 15-demethoxy-epsilon-rhodomycin coupled to hydroxylation at the same C-10 position to yield beta-rhodomycin. In vitro, can also catalyze the removal of the carboxylic group at the C-10 position of 15-demethoxyaclacinomycin T coupled to hydroxylation at the same C-10 position to yield 10-decarboxymethylaclacinomycin T. It can also use 10-carboxy-13-deoxycarminomycin, an analog of 15-demethoxy-epsilon-rhodomycin, to yield 10-hydroxy-13-deoxycarminomycin. In addition to its hydroxylation activity, it can act in vitro as a S-adenosyl-L-methionine-dependent O-methyltransferase and catalyze the 4-O-methylation of 10-hydroxy-13-deoxycarminomycin to 10-hydroxy-13-deoxydaunorubicin. The triglycosyl group of anthracyclines prevents the methylation reaction. The chain is Aclacinomycin 10-hydroxylase RdmB from Streptomyces purpurascens.